The following is a 415-amino-acid chain: Corticotropin-releasing factor receptor 1 (415 aa).

Residues M1–T23 form the signal peptide. Residues S24–K111 are Extracellular-facing. 3 disulfides stabilise this stretch: C30/C54, C44/C87, and C68/C102. 5 N-linked (GlcNAc...) asparagine glycosylation sites follow: N38, N45, N78, N90, and N98. The interval Y99–E108 is important for peptide agonist binding. Residues S112–L142 traverse the membrane as a helical segment. The Cytoplasmic segment spans residues R143 to C149. The helical transmembrane segment at L150–L174 threads the bilayer. The Extracellular portion of the chain corresponds to T175–R189. A disulfide bridge connects residues C188 and C258. Residues L190–V218 form a helical membrane-spanning segment. The Cytoplasmic portion of the chain corresponds to L219 to R225. The chain crosses the membrane as a helical span at residues L226–Y253. Over D254 to D269 the chain is Extracellular. A helical membrane pass occupies residues Y270–M295. The segment at L280–I290 is important for antagonist binding. At T296–T306 the chain is on the cytoplasmic side. At S301 the chain carries Phosphoserine; by PKA. A helical membrane pass occupies residues I307–F331. Residues V332–E338 lie on the Extracellular side of the membrane. Residues V339–S368 form a helical membrane-spanning segment. Residues E369–V415 lie on the Cytoplasmic side of the membrane.

It belongs to the G-protein coupled receptor 2 family. As to quaternary structure, heterodimer; heterodimerizes with GPER1. Interacts (via N-terminal extracellular domain) with CRH and UCN. Interacts with DLG1; this inhibits endocytosis of CRHR1 after agonist binding. In terms of processing, C-terminal Ser or Thr residues may be phosphorylated. Phosphorylation at Ser-301 by PKA prevents maximal coupling to Gq-protein, and thereby negatively regulates downstream signaling. Detected in brain cortex (at protein level).

The protein localises to the cell membrane. It localises to the endosome. G-protein coupled receptor for CRH (corticotropin-releasing factor) and UCN (urocortin). Has high affinity for CRH and UCN. Ligand binding causes a conformation change that triggers signaling via guanine nucleotide-binding proteins (G proteins) and down-stream effectors, such as adenylate cyclase. Promotes the activation of adenylate cyclase, leading to increased intracellular cAMP levels. Inhibits the activity of the calcium channel CACNA1H. Required for normal embryonic development of the adrenal gland and for normal hormonal responses to stress. Plays a role in the response to anxiogenic stimuli. The sequence is that of Corticotropin-releasing factor receptor 1 (Crhr1) from Mus musculus (Mouse).